Reading from the N-terminus, the 114-residue chain is Iron-sulfur cluster insertion protein ErpA (114 aa).

Iron-sulfur cluster contacts are provided by Cys-42, Cys-106, and Cys-108.

Belongs to the HesB/IscA family. As to quaternary structure, homodimer. The cofactor is iron-sulfur cluster.

Its function is as follows. Required for insertion of 4Fe-4S clusters for at least IspG. The polypeptide is Iron-sulfur cluster insertion protein ErpA (Wigglesworthia glossinidia brevipalpis).